The following is a 201-amino-acid chain: Dephospho-CoA kinase (201 aa).

The region spanning 4–201 (AFFVTASIAC…VIQEISKGKM (198 aa)) is the DPCK domain. 12-17 (ACGKST) is a binding site for ATP.

This sequence belongs to the CoaE family.

Its subcellular location is the cytoplasm. The enzyme catalyses 3'-dephospho-CoA + ATP = ADP + CoA + H(+). It functions in the pathway cofactor biosynthesis; coenzyme A biosynthesis; CoA from (R)-pantothenate: step 5/5. Its function is as follows. Catalyzes the phosphorylation of the 3'-hydroxyl group of dephosphocoenzyme A to form coenzyme A. The chain is Dephospho-CoA kinase from Campylobacter jejuni (strain RM1221).